The chain runs to 215 residues: Meiotic chromosome segregation protein P8B7.28c (215 aa).

Positions 159 to 202 are disordered; it reads TINSEYADDVSDNTDEERTESKGQQESNSAEEYDDDDSDEDRME. 2 stretches are compositionally biased toward acidic residues: residues 164–176 and 187–201; these read YADD…DEER and SAEE…EDRM.

It is found in the nucleus. The protein resides in the nucleolus. In terms of biological role, required for meiotic chromosome segregation. The protein is Meiotic chromosome segregation protein P8B7.28c of Schizosaccharomyces pombe (strain 972 / ATCC 24843) (Fission yeast).